Here is a 217-residue protein sequence, read N- to C-terminus: GTP cyclohydrolase 1 (217 aa).

Cys-108, His-111, and Cys-179 together coordinate Zn(2+).

This sequence belongs to the GTP cyclohydrolase I family. Toroid-shaped homodecamer, composed of two pentamers of five dimers.

The enzyme catalyses GTP + H2O = 7,8-dihydroneopterin 3'-triphosphate + formate + H(+). It participates in cofactor biosynthesis; 7,8-dihydroneopterin triphosphate biosynthesis; 7,8-dihydroneopterin triphosphate from GTP: step 1/1. The sequence is that of GTP cyclohydrolase 1 from Shewanella denitrificans (strain OS217 / ATCC BAA-1090 / DSM 15013).